Reading from the N-terminus, the 233-residue chain is Mediator of RNA polymerase II transcription subunit 7 (233 aa).

A Glycyl lysine isopeptide (Lys-Gly) (interchain with G-Cter in SUMO1); alternate cross-link involves residue Lys-185. Lys-185 is covalently cross-linked (Glycyl lysine isopeptide (Lys-Gly) (interchain with G-Cter in SUMO2); alternate). The disordered stretch occupies residues 187 to 213 (EPMDADDSNNCTGQNEHQRENSGHRRD). Ser-194 carries the post-translational modification Phosphoserine. The span at 202–213 (EHQRENSGHRRD) shows a compositional bias: basic and acidic residues.

This sequence belongs to the Mediator complex subunit 7 family. Component of the Mediator complex, which is composed of MED1, MED4, MED6, MED7, MED8, MED9, MED10, MED11, MED12, MED13, MED13L, MED14, MED15, MED16, MED17, MED18, MED19, MED20, MED21, MED22, MED23, MED24, MED25, MED26, MED27, MED29, MED30, MED31, CCNC, CDK8 and CDC2L6/CDK11. The MED12, MED13, CCNC and CDK8 subunits form a distinct module termed the CDK8 module. Mediator containing the CDK8 module is less active than Mediator lacking this module in supporting transcriptional activation. Individual preparations of the Mediator complex lacking one or more distinct subunits have been variously termed ARC, CRSP, DRIP, PC2, SMCC and TRAP. Post-translationally, constitutively sumoylated.

The protein resides in the nucleus. In terms of biological role, component of the Mediator complex, a coactivator involved in the regulated transcription of nearly all RNA polymerase II-dependent genes. Mediator functions as a bridge to convey information from gene-specific regulatory proteins to the basal RNA polymerase II transcription machinery. Mediator is recruited to promoters by direct interactions with regulatory proteins and serves as a scaffold for the assembly of a functional preinitiation complex with RNA polymerase II and the general transcription factors. This is Mediator of RNA polymerase II transcription subunit 7 (MED7) from Homo sapiens (Human).